The following is a 471-amino-acid chain: Dynein regulatory complex subunit 4 (471 aa).

The tract at residues 1-24 is disordered; sequence MAPKKKGTKKESKKDAVATGDIEG. 2 coiled-coil regions span residues 23 to 239 and 282 to 425; these read EGAS…YNDI and LSRA…DVAK.

This sequence belongs to the DRC4 family. Component of the nexin-dynein regulatory complex (N-DRC). Interacts with DRC1, DRC2 and DRC5.

It is found in the cytoplasm. The protein localises to the cytoskeleton. It localises to the flagellum axoneme. Its subcellular location is the flagellum basal body. Its function is as follows. Component of the nexin-dynein regulatory complex (N-DRC), a key regulator of ciliary/flagellar motility which maintains the alignment and integrity of the distal axoneme and regulates microtubule sliding in motile axonemes. Plays an important role in the assembly of the N-DRC linker. In Chlamydomonas reinhardtii (Chlamydomonas smithii), this protein is Dynein regulatory complex subunit 4.